Here is a 511-residue protein sequence, read N- to C-terminus: Maturase K (511 aa).

The protein belongs to the intron maturase 2 family. MatK subfamily.

The protein localises to the plastid. It localises to the chloroplast. Functionally, usually encoded in the trnK tRNA gene intron. Probably assists in splicing its own and other chloroplast group II introns. The chain is Maturase K from Diplacus aurantiacus (Orange bush monkey flower).